Consider the following 116-residue polypeptide: Nitrogen regulatory PII-like protein (116 aa).

This sequence belongs to the P(II) protein family. As to quaternary structure, needs to interact with NrgA in order to localize correctly to the membrane.

It localises to the cell membrane. Functionally, required for full induction of the nrgAB operon under conditions of ammonium limitation. The protein is Nitrogen regulatory PII-like protein (nrgB) of Bacillus subtilis (strain 168).